A 362-amino-acid polypeptide reads, in one-letter code: NAD(P)H-quinone oxidoreductase subunit 1, chloroplastic (362 aa).

8 helical membrane passes run 29 to 49 (ILPILTLLLGITIEVLVIVWL), 103 to 123 (IAVISVLLSFLVIPLGYHFVL), 128 to 148 (IGVFLWIAISSIAPIGLLMAG), 164 to 184 (AAQSISYEIPLTFCVLAISLL), 202 to 222 (FFGWNIWRQPIGFLVFLISSL), 247 to 267 (YSGIKYGLFYLVSYLNLLVSS), 303 to 323 (TMGIFITLTKAYLFLFISITI), and 335 to 355 (LLNLGWKFLLPISLGNLLLTT).

It belongs to the complex I subunit 1 family. In terms of assembly, NDH is composed of at least 16 different subunits, 5 of which are encoded in the nucleus.

It localises to the plastid. Its subcellular location is the chloroplast thylakoid membrane. It catalyses the reaction a plastoquinone + NADH + (n+1) H(+)(in) = a plastoquinol + NAD(+) + n H(+)(out). The enzyme catalyses a plastoquinone + NADPH + (n+1) H(+)(in) = a plastoquinol + NADP(+) + n H(+)(out). Functionally, NDH shuttles electrons from NAD(P)H:plastoquinone, via FMN and iron-sulfur (Fe-S) centers, to quinones in the photosynthetic chain and possibly in a chloroplast respiratory chain. The immediate electron acceptor for the enzyme in this species is believed to be plastoquinone. Couples the redox reaction to proton translocation, and thus conserves the redox energy in a proton gradient. This chain is NAD(P)H-quinone oxidoreductase subunit 1, chloroplastic, found in Triticum aestivum (Wheat).